The primary structure comprises 1699 residues: Genome polyprotein (1699 aa).

Over residues 1-19 (MKMASNDASAAAVVNSNND) the composition is skewed to low complexity. A disordered region spans residues 1 to 78 (MKMASNDASA…PPPPPNGEDE (78 aa)). Residues 1 to 116 (MKMASNDASA…AFSVPPLNQR (116 aa)) form an interaction with host MAP1LC3A/LC3 region. Positions 46–74 (QPPPRETPQRPPRPPTPELVKKIPPPPPN) are enriched in pro residues. Residues 117–330 (ENRDAKEPLT…APLLGDYELQ (214 aa)) form an interaction with NTPase region. The interval 233–330 (RPYQDWNRKP…APLLGDYELQ (98 aa)) is interaction with NS4. 2 host ER membrane association regions span residues 250-281 (KLKKVANVFLCALSSLFTRPIKDIIGKLRPLN) and 292-330 (TFAGIVESLILLAELFGVFWTPPDVSAMIAPLLGDYELQ). The interval 331–509 (GPEDLAVELV…GKTHLARELA (179 aa)) is interaction with NS1-2, NS4 and homooligomerization. Residues 465-632 (LARIAAARSL…EKAKRDFPGQ (168 aa)) enclose the SF3 helicase domain. 495-502 (GKPGIGKT) provides a ligand contact to ATP. Positions 586–691 (AIIITTNLAN…ASGLLHERLD (106 aa)) are important for mitochondrion targeting. The tract at residues 764-770 (YTLESDG) is functions as endoplasmic reticulum export signal. The host membrane association stretch occupies residues 801-850 (RIRYYVKCVQEALYSIIQIAGAAFVTTRIVKRMNIQDLWSKPQVEDTEDT). The tract at residues 843–894 (QVEDTEDTANKDGCPKPKDDEEFVVSSDDIKTEGKKGKNKTGRGKKHTAFSS) is disordered. The segment covering 850-861 (TANKDGCPKPKD) has biased composition (basic and acidic residues). The span at 879–890 (GKNKTGRGKKHT) shows a compositional bias: basic residues. Residues 899-904 (DEEYDE) are acidic. Tyrosine 902 is modified (O-(5'-phospho-RNA)-tyrosine). Positions 992–1008 (WADDDRSVDYNEKLDFE) are interaction with host EIF4G. The Peptidase C37 domain occupies 1009-1189 (APPSIWSRIV…QGSEGEATLE (181 aa)). Catalysis depends on for 3CLpro activity residues histidine 1038, glutamate 1062, and cysteine 1147. Residues 1425-1546 (KYHYDADYSR…STDINLNPEK (122 aa)) enclose the RdRp catalytic domain. Residues aspartate 1429, aspartate 1431, aspartate 1533, and glutamate 1534 each contribute to the Mg(2+) site.

Homodimer. Homooligomer. Interacts with NTPase; this interaction increases the proapoptotic activity of the NTPase and is crucial for the formation of the viral replication complex. Interacts with NS4; this interaction is crucial for the formation of the viral replication complex. Interacts (via N-terminus) with host VAPA. Interacts with host MAP1LC3A/LC3; this interaction does not seem to be linked to host autophagy, but rather plays a role in the formation of viral factories. In terms of assembly, homooligomer. Interacts with NS1-2; this interaction increases the proapoptotic activity of the NTPase and is crucial for the formation of the viral replication complex. Interacts with NS4; this interaction increases the proapoptotic activity of the NTPase. As to quaternary structure, homodimer. Monomer; in solution. Interacts with NTPase; this interaction increases the proapoptotic activity of the NTPase. Interacts with NS1-2; this interaction is crucial for the formation of the viral replication complex. In terms of assembly, monomer. Interacts with the RNA-directed RNA polymerase; this interaction induces the multimerization of the RdRp and enhances its activity. Interacts with host IEF4G1; this interaction plays a role in translation of viral proteins. As to quaternary structure, homohexamer; also forms fibrous hexameric oligomer. Interacts with the viral genome-linked protein; this interaction induces the multimerization of the RdRp and enhances its activity. Mg(2+) serves as cofactor. The cofactor is Mn(2+). In terms of processing, specific enzymatic cleavages in vivo yield mature proteins. 3CLpro is first autocatalytically cleaved, then processes the whole polyprotein. NS1/2-3 and NS3-4 sites are cleaved rapidly and NS4-5, NS5-6, and NS6-7 sites are processed subsequently and less efficiently. Post-translationally, VPg is uridylylated by the polymerase and is covalently attached to the 5'-end of the polyadenylated genomic and subgenomic RNAs. This uridylylated form acts as a nucleotide-peptide primer for the polymerase. Cleaved by host CASP3/caspase 3 at 18-22 h.p.i. The cleavage allows NS1 secretion, which is essential for intestinal infection and resistance to IFN-lambda.

Its subcellular location is the host endoplasmic reticulum membrane. The protein resides in the secreted. It is found in the host mitochondrion. It localises to the host Golgi apparatus membrane. The protein localises to the host cytoplasm. Its subcellular location is the host perinuclear region. It carries out the reaction a ribonucleoside 5'-triphosphate + H2O = a ribonucleoside 5'-diphosphate + phosphate + H(+). The catalysed reaction is Endopeptidase with a preference for cleavage when the P1 position is occupied by Glu-|-Xaa and the P1' position is occupied by Gly-|-Yaa.. It catalyses the reaction RNA(n) + a ribonucleoside 5'-triphosphate = RNA(n+1) + diphosphate. Its function is as follows. Induces the proliferation of the host smooth ER membranes forming long tubular structures. These remodeled membranes probably form the viral factories that contain the replication complex. May play a role in viral replication by interacting with host VAPA, a vesicle-associated membrane protein that plays a role in SNARE-mediated vesicle fusion. This interaction may target replication complex to intracellular membranes. Displays NTPase activity, but no helicase activity. Displays RNA chaperone-like activity and destabilizes dsRNA. Induces the formation of convoluted membranes derived from the host ER. These remodeled membranes probably form the viral factories that contain the replication complex. Initiates host cell death by targeting the mitochondrial outer membrane, leading to the permeabilization of mitochondria, programmed host cell death and viral egress. Externalization of host cardiolipin seems to be involved in the process. Probably plays a role in preventing the assembly of host stress granules. In terms of biological role, probable key protein responsible for the formation of membrane alterations by the virus. Induces the formation of convoluted membranes derived from the host ER. These remodeled membranes probably form the viral factories that contain the replication complex. May play a role in targeting replication complex to intracellular membranes. Functionally, viral genome-linked protein is covalently linked to the 5'-end of the positive-strand, negative-strand genomic RNAs and subgenomic RNA. Acts as a genome-linked replication primer. May recruit ribosome to viral RNA thereby promoting viral proteins translation. Interacts with host translation initiation complex to allow the translation of viral proteins. Induces the formation of aggregates of RNA-directed RNA polymerase in the presence of RNA. Through its interaction with the viral RNA-directed RNA polymerase, plays a crucial role in enhancing the polymerase activity. Its function is as follows. Processes the polyprotein. 3CLpro-RdRp is first released by autocleavage, then all other proteins are cleaved. May cleave polyadenylate-binding protein thereby inhibiting cellular translation. Replicates genomic and antigenomic RNA by recognizing replications specific signals. Also transcribes a subgenomic mRNA by initiating RNA synthesis internally on antigenomic RNA. This sgRNA codes for structural proteins. Catalyzes the covalent attachment VPg with viral RNAs. The chain is Genome polyprotein from Lordsdale virus (strain GII/Human/United Kingdom/Lordsdale/1993) (Human enteric calicivirus).